A 502-amino-acid polypeptide reads, in one-letter code: UPF0371 protein CLL_A2797 (502 aa).

Belongs to the UPF0371 family.

The protein is UPF0371 protein CLL_A2797 of Clostridium botulinum (strain Eklund 17B / Type B).